The following is an 88-amino-acid chain: Actobindin (88 aa).

Residue M1 is modified to N-acetylmethionine. The tract at residues 1–22 (MNPELQSAIGQGAALKHAETVD) is disordered. The residue at position 35 (K35) is an N6,N6,N6-trimethyllysine. Positions 37–54 (DRSSFLEEVAKPHELKHA) constitute a WH2 domain. N6,N6,N6-trimethyllysine is present on K72.

In terms of assembly, monomer.

In terms of biological role, is able to bind two actin monomers at high concentrations of G-actin. This Acanthamoeba castellanii (Amoeba) protein is Actobindin.